Here is an 859-residue protein sequence, read N- to C-terminus: Leucine--tRNA ligase (859 aa).

A 'HIGH' region motif is present at residues 42–52; that stretch reads PYPSGRLHMGH. The 'KMSKS' region signature appears at 618-622; that stretch reads KMSKS. An ATP-binding site is contributed by Lys621.

This sequence belongs to the class-I aminoacyl-tRNA synthetase family.

It localises to the cytoplasm. The catalysed reaction is tRNA(Leu) + L-leucine + ATP = L-leucyl-tRNA(Leu) + AMP + diphosphate. This Shewanella amazonensis (strain ATCC BAA-1098 / SB2B) protein is Leucine--tRNA ligase.